We begin with the raw amino-acid sequence, 155 residues long: CASP-like protein 5B2 (155 aa).

The Cytoplasmic portion of the chain corresponds to 1-18 (MWEVAWWRPGTWGGLAMR). The chain crosses the membrane as a helical span at residues 19–39 (VGQVAFAGASIGVMASGAGFA). N40 carries N-linked (GlcNAc...) asparagine glycosylation. Over 40–43 (NYTA) the chain is Extracellular. The chain crosses the membrane as a helical span at residues 44-64 (FCYLIASMGLQSLWSLGLACL). Topologically, residues 65 to 77 (DVYALTVKRDLNN) are cytoplasmic. A helical membrane pass occupies residues 78–98 (ALLVSLFVIGDWVTALLSFAA). The Extracellular portion of the chain corresponds to 99–128 (SCSAGGVMVLFKRDVLFCRRYPQLPCGRFE). A helical membrane pass occupies residues 129–149 (LAVALAFLSWALSATSAIIMF). The Cytoplasmic portion of the chain corresponds to 150-155 (CLLAAF).

It belongs to the Casparian strip membrane proteins (CASP) family. Homodimer and heterodimers.

The protein resides in the cell membrane. This chain is CASP-like protein 5B2, found in Oryza sativa subsp. indica (Rice).